The chain runs to 137 residues: Putative pre-16S rRNA nuclease (137 aa).

It belongs to the YqgF nuclease family.

The protein localises to the cytoplasm. Functionally, could be a nuclease involved in processing of the 5'-end of pre-16S rRNA. In Bacillus mycoides (strain KBAB4) (Bacillus weihenstephanensis), this protein is Putative pre-16S rRNA nuclease.